We begin with the raw amino-acid sequence, 348 residues long: Phenylalanine--tRNA ligase alpha subunit (348 aa).

Position 262 (Glu-262) interacts with Mg(2+).

The protein belongs to the class-II aminoacyl-tRNA synthetase family. Phe-tRNA synthetase alpha subunit type 1 subfamily. Tetramer of two alpha and two beta subunits. Mg(2+) serves as cofactor.

The protein resides in the cytoplasm. The enzyme catalyses tRNA(Phe) + L-phenylalanine + ATP = L-phenylalanyl-tRNA(Phe) + AMP + diphosphate + H(+). This chain is Phenylalanine--tRNA ligase alpha subunit, found in Streptococcus pneumoniae serotype 2 (strain D39 / NCTC 7466).